The sequence spans 76 residues: DNA-binding protein S1FA2 (76 aa).

The short motif at 50–55 is the Nuclear localization signal element; that stretch reads PPRKKK. A compositionally biased stretch (basic residues) spans 51 to 66; it reads PRKKKPLSKKKLKREK. Residues 51–76 form a disordered region; sequence PRKKKPLSKKKLKREKLKQGVPVPGE.

It belongs to the S1FA transcription factor family.

It localises to the nucleus. Its function is as follows. DNA-binding protein that specifically recognizes a negative element (S1F) within the RPS1 promoter. This Arabidopsis thaliana (Mouse-ear cress) protein is DNA-binding protein S1FA2 (S1FA2).